Reading from the N-terminus, the 475-residue chain is ATP synthase subunit beta (475 aa).

An ATP-binding site is contributed by 154-161 (GGAGVGKT).

Belongs to the ATPase alpha/beta chains family. F-type ATPases have 2 components, CF(1) - the catalytic core - and CF(0) - the membrane proton channel. CF(1) has five subunits: alpha(3), beta(3), gamma(1), delta(1), epsilon(1). CF(0) has three main subunits: a(1), b(2) and c(9-12). The alpha and beta chains form an alternating ring which encloses part of the gamma chain. CF(1) is attached to CF(0) by a central stalk formed by the gamma and epsilon chains, while a peripheral stalk is formed by the delta and b chains.

The protein localises to the cell inner membrane. The catalysed reaction is ATP + H2O + 4 H(+)(in) = ADP + phosphate + 5 H(+)(out). Functionally, produces ATP from ADP in the presence of a proton gradient across the membrane. The catalytic sites are hosted primarily by the beta subunits. This is ATP synthase subunit beta from Hyphomonas neptunium (strain ATCC 15444).